A 233-amino-acid chain; its full sequence is Ribosomal RNA small subunit methyltransferase G (233 aa).

Residues 1–25 form a disordered region; the sequence is MASRQSPMAVSQPDHADRSAALQLT. S-adenosyl-L-methionine-binding residues include Gly-85, Phe-90, and Arg-155.

This sequence belongs to the methyltransferase superfamily. RNA methyltransferase RsmG family.

Its subcellular location is the cytoplasm. The catalysed reaction is guanosine(527) in 16S rRNA + S-adenosyl-L-methionine = N(7)-methylguanosine(527) in 16S rRNA + S-adenosyl-L-homocysteine. Specifically methylates the N7 position of guanine in position 527 of 16S rRNA. The protein is Ribosomal RNA small subunit methyltransferase G of Rhodopseudomonas palustris (strain BisB5).